The following is a 414-amino-acid chain: Enolase (414 aa).

Glutamine 156 is a (2R)-2-phosphoglycerate binding site. Glutamate 200 serves as the catalytic Proton donor. 3 residues coordinate Mg(2+): aspartate 236, glutamate 281, and aspartate 308. Residues lysine 333, arginine 362, serine 363, and lysine 384 each contribute to the (2R)-2-phosphoglycerate site. Lysine 333 acts as the Proton acceptor in catalysis.

It belongs to the enolase family. Requires Mg(2+) as cofactor.

The protein localises to the cytoplasm. The protein resides in the secreted. Its subcellular location is the cell surface. It carries out the reaction (2R)-2-phosphoglycerate = phosphoenolpyruvate + H2O. The protein operates within carbohydrate degradation; glycolysis; pyruvate from D-glyceraldehyde 3-phosphate: step 4/5. In terms of biological role, catalyzes the reversible conversion of 2-phosphoglycerate (2-PG) into phosphoenolpyruvate (PEP). It is essential for the degradation of carbohydrates via glycolysis. This is Enolase from Methanosphaera stadtmanae (strain ATCC 43021 / DSM 3091 / JCM 11832 / MCB-3).